A 795-amino-acid chain; its full sequence is Phenylalanine--tRNA ligase beta subunit (795 aa).

A tRNA-binding domain is found at 39-148 (AGSFNGVVVG…ADAPLGTDIR (110 aa)). One can recognise a B5 domain in the interval 401–476 (PKRATITLRR…RVYGYNNIPD (76 aa)). Mg(2+) contacts are provided by aspartate 454, aspartate 460, glutamate 463, and glutamate 464. The region spanning 701–794 (SRFPANRRDI…LKERFQASLR (94 aa)) is the FDX-ACB domain.

Belongs to the phenylalanyl-tRNA synthetase beta subunit family. Type 1 subfamily. In terms of assembly, tetramer of two alpha and two beta subunits. Mg(2+) is required as a cofactor.

The protein resides in the cytoplasm. It carries out the reaction tRNA(Phe) + L-phenylalanine + ATP = L-phenylalanyl-tRNA(Phe) + AMP + diphosphate + H(+). This is Phenylalanine--tRNA ligase beta subunit from Salmonella choleraesuis (strain SC-B67).